We begin with the raw amino-acid sequence, 569 residues long: Probable diguanylate cyclase DgcQ (569 aa).

A run of 2 helical transmembrane segments spans residues 25 to 45 (LGPG…STLL) and 365 to 385 (IALT…WYVI). A GGDEF domain is found at 433-568 (HPFSVIQVDL…GRNRVCASDN (136 aa)). A Mg(2+)-binding site is contributed by Asp441. Positions 449, 454, and 458 each coordinate substrate. Glu484 is a binding site for Mg(2+). Catalysis depends on Glu484, which acts as the Proton acceptor.

Homodimer. Mg(2+) is required as a cofactor.

The protein localises to the cell inner membrane. It carries out the reaction 2 GTP = 3',3'-c-di-GMP + 2 diphosphate. Its pathway is glycan metabolism; bacterial cellulose biosynthesis. It participates in purine metabolism; 3',5'-cyclic di-GMP biosynthesis. Catalyzes the synthesis of cyclic-di-GMP (c-di-GMP) via the condensation of 2 GTP molecules. Cyclic-di-GMP is a second messenger which controls cell surface-associated traits in bacteria. Involved in the regulation of cellulose production. The sequence is that of Probable diguanylate cyclase DgcQ from Shigella sonnei (strain Ss046).